Here is a 627-residue protein sequence, read N- to C-terminus: tRNA uridine 5-carboxymethylaminomethyl modification enzyme MnmG (627 aa).

FAD contacts are provided by residues 13–18, V125, and S180; that span reads GGGHAG. 274-288 contributes to the NAD(+) binding site; that stretch reads GPRYCPSIEDKVVRF. An FAD-binding site is contributed by Q371.

It belongs to the MnmG family. Homodimer. Heterotetramer of two MnmE and two MnmG subunits. It depends on FAD as a cofactor.

Its subcellular location is the cytoplasm. NAD-binding protein involved in the addition of a carboxymethylaminomethyl (cmnm) group at the wobble position (U34) of certain tRNAs, forming tRNA-cmnm(5)s(2)U34. This chain is tRNA uridine 5-carboxymethylaminomethyl modification enzyme MnmG, found in Francisella tularensis subsp. novicida (strain U112).